We begin with the raw amino-acid sequence, 127 residues long: Calcium-binding protein PBP1 (127 aa).

Polar residues predominate over residues 1-18 (MASPKSSTRPNQENQEPQ). The disordered stretch occupies residues 1 to 20 (MASPKSSTRPNQENQEPQFQ). The EF-hand domain maps to 72–107 (LTDDDVRYMINEGDFDRDGALNQMEFCVLMFRLSPE). Ca(2+)-binding residues include D85, D87, D89, and E96.

In terms of assembly, interacts with PID.

In terms of biological role, potential calcium sensor that binds calcium in vitro. This is Calcium-binding protein PBP1 (PBP1) from Arabidopsis thaliana (Mouse-ear cress).